A 284-amino-acid chain; its full sequence is Pantothenate synthetase (284 aa).

30–37 lines the ATP pocket; the sequence is MGNLHDGH. Residue H37 is the Proton donor of the active site. Residue Q61 participates in (R)-pantoate binding. Q61 contacts beta-alanine. Residue 149 to 152 participates in ATP binding; it reads GEKD. (R)-pantoate is bound at residue Q155. ATP is bound by residues V178 and 186-189; that span reads LSSR.

Belongs to the pantothenate synthetase family. In terms of assembly, homodimer.

It localises to the cytoplasm. The catalysed reaction is (R)-pantoate + beta-alanine + ATP = (R)-pantothenate + AMP + diphosphate + H(+). It participates in cofactor biosynthesis; (R)-pantothenate biosynthesis; (R)-pantothenate from (R)-pantoate and beta-alanine: step 1/1. Catalyzes the condensation of pantoate with beta-alanine in an ATP-dependent reaction via a pantoyl-adenylate intermediate. This chain is Pantothenate synthetase, found in Klebsiella pneumoniae subsp. pneumoniae (strain ATCC 700721 / MGH 78578).